The following is a 372-amino-acid chain: NAD(P)H-quinone oxidoreductase subunit 1 (372 aa).

8 helical membrane-spanning segments follow: residues Trp-29 to Val-49, Trp-97 to Val-117, Val-130 to Gly-150, Leu-176 to Val-196, Ile-204 to Leu-224, Phe-254 to Ile-274, Ser-308 to Met-328, and Phe-347 to Pro-367.

The protein belongs to the complex I subunit 1 family. As to quaternary structure, NDH-1 is composed of at least 11 different subunits.

Its subcellular location is the cellular thylakoid membrane. It catalyses the reaction a plastoquinone + NADH + (n+1) H(+)(in) = a plastoquinol + NAD(+) + n H(+)(out). The enzyme catalyses a plastoquinone + NADPH + (n+1) H(+)(in) = a plastoquinol + NADP(+) + n H(+)(out). Functionally, NDH-1 shuttles electrons from an unknown electron donor, via FMN and iron-sulfur (Fe-S) centers, to quinones in the respiratory and/or the photosynthetic chain. The immediate electron acceptor for the enzyme in this species is believed to be plastoquinone. Couples the redox reaction to proton translocation, and thus conserves the redox energy in a proton gradient. The protein is NAD(P)H-quinone oxidoreductase subunit 1 of Crocosphaera subtropica (strain ATCC 51142 / BH68) (Cyanothece sp. (strain ATCC 51142)).